The chain runs to 293 residues: 4-hydroxy-tetrahydrodipicolinate synthase (293 aa).

Residue threonine 45 participates in pyruvate binding. The active-site Proton donor/acceptor is tyrosine 133. Lysine 161 serves as the catalytic Schiff-base intermediate with substrate. Isoleucine 203 contributes to the pyruvate binding site.

The protein belongs to the DapA family. Homotetramer; dimer of dimers.

The protein localises to the cytoplasm. It carries out the reaction L-aspartate 4-semialdehyde + pyruvate = (2S,4S)-4-hydroxy-2,3,4,5-tetrahydrodipicolinate + H2O + H(+). The protein operates within amino-acid biosynthesis; L-lysine biosynthesis via DAP pathway; (S)-tetrahydrodipicolinate from L-aspartate: step 3/4. Functionally, catalyzes the condensation of (S)-aspartate-beta-semialdehyde [(S)-ASA] and pyruvate to 4-hydroxy-tetrahydrodipicolinate (HTPA). The chain is 4-hydroxy-tetrahydrodipicolinate synthase from Aliivibrio fischeri (strain MJ11) (Vibrio fischeri).